We begin with the raw amino-acid sequence, 204 residues long: Small ribosomal subunit protein uS4 (204 aa).

The S4 RNA-binding domain occupies 95–157 (RRLDNTVFRM…KGIHSIIRHN (63 aa)).

Belongs to the universal ribosomal protein uS4 family. Part of the 30S ribosomal subunit. Contacts protein S5. The interaction surface between S4 and S5 is involved in control of translational fidelity.

One of the primary rRNA binding proteins, it binds directly to 16S rRNA where it nucleates assembly of the body of the 30S subunit. Functionally, with S5 and S12 plays an important role in translational accuracy. The chain is Small ribosomal subunit protein uS4 from Treponema pallidum (strain Nichols).